A 185-amino-acid chain; its full sequence is Ribosome-recycling factor (185 aa).

The protein belongs to the RRF family.

The protein localises to the cytoplasm. Responsible for the release of ribosomes from messenger RNA at the termination of protein biosynthesis. May increase the efficiency of translation by recycling ribosomes from one round of translation to another. The sequence is that of Ribosome-recycling factor from Proteus mirabilis (strain HI4320).